A 467-amino-acid chain; its full sequence is 5'-nucleotidase domain-containing protein 1 (467 aa).

Residue aspartate 16 is the Nucleophile of the active site. Mg(2+) contacts are provided by aspartate 16 and aspartate 18. Aspartate 18 serves as the catalytic Proton donor. Lysine 181 carries the N6-acetyllysine modification. Aspartate 323 contributes to the Mg(2+) binding site.

The protein belongs to the 5'(3')-deoxyribonucleotidase family.

This chain is 5'-nucleotidase domain-containing protein 1 (Nt5dc1), found in Mus musculus (Mouse).